Consider the following 445-residue polypeptide: 3-phosphoshikimate 1-carboxyvinyltransferase (445 aa).

3 residues coordinate 3-phosphoshikimate: Lys-28, Ser-29, and Arg-33. Lys-28 provides a ligand contact to phosphoenolpyruvate. Phosphoenolpyruvate contacts are provided by Gly-102 and Arg-130. The 3-phosphoshikimate site is built by Ser-179, Ser-180, Gln-181, Glu-330, and His-357. Gln-181 serves as a coordination point for phosphoenolpyruvate. Residue Glu-330 is the Proton acceptor of the active site. Residues Arg-361, Arg-405, and Lys-430 each coordinate phosphoenolpyruvate.

Belongs to the EPSP synthase family. Monomer.

The protein resides in the cytoplasm. It catalyses the reaction 3-phosphoshikimate + phosphoenolpyruvate = 5-O-(1-carboxyvinyl)-3-phosphoshikimate + phosphate. Its pathway is metabolic intermediate biosynthesis; chorismate biosynthesis; chorismate from D-erythrose 4-phosphate and phosphoenolpyruvate: step 6/7. In terms of biological role, catalyzes the transfer of the enolpyruvyl moiety of phosphoenolpyruvate (PEP) to the 5-hydroxyl of shikimate-3-phosphate (S3P) to produce enolpyruvyl shikimate-3-phosphate and inorganic phosphate. The polypeptide is 3-phosphoshikimate 1-carboxyvinyltransferase (Bifidobacterium longum (strain DJO10A)).